The primary structure comprises 305 residues: Probable alpha-L-glutamate ligase (305 aa).

In terms of domain architecture, ATP-grasp spans 119-301; it reads LQVLAAQHIP…IAGLIIDYLL (183 aa). ATP contacts are provided by residues K155, 192–193, D201, and 225–227; these read DF and RAN. Mg(2+) contacts are provided by D262, E274, and N276. Mn(2+)-binding residues include D262, E274, and N276.

This sequence belongs to the RimK family. The cofactor is Mg(2+). It depends on Mn(2+) as a cofactor.

The polypeptide is Probable alpha-L-glutamate ligase (Haemophilus ducreyi (strain 35000HP / ATCC 700724)).